Here is a 207-residue protein sequence, read N- to C-terminus: Large ribosomal subunit protein uL4 (207 aa).

Residues lysine 48–glycine 70 form a disordered region.

This sequence belongs to the universal ribosomal protein uL4 family. As to quaternary structure, part of the 50S ribosomal subunit.

Its function is as follows. One of the primary rRNA binding proteins, this protein initially binds near the 5'-end of the 23S rRNA. It is important during the early stages of 50S assembly. It makes multiple contacts with different domains of the 23S rRNA in the assembled 50S subunit and ribosome. Functionally, forms part of the polypeptide exit tunnel. The protein is Large ribosomal subunit protein uL4 of Francisella tularensis subsp. holarctica (strain FTNF002-00 / FTA).